The sequence spans 91 residues: Small ribosomal subunit protein uS19 (91 aa).

The protein belongs to the universal ribosomal protein uS19 family.

Its function is as follows. Protein S19 forms a complex with S13 that binds strongly to the 16S ribosomal RNA. This chain is Small ribosomal subunit protein uS19, found in Verminephrobacter eiseniae (strain EF01-2).